The primary structure comprises 218 residues: Ribose-5-phosphate isomerase A (218 aa).

Residues 28–31, 81–84, and 94–97 contribute to the substrate site; these read TGST, DGAD, and KGGG. The Proton acceptor role is filled by glutamate 103. Residue lysine 121 coordinates substrate.

It belongs to the ribose 5-phosphate isomerase family. As to quaternary structure, homodimer.

The enzyme catalyses aldehydo-D-ribose 5-phosphate = D-ribulose 5-phosphate. It participates in carbohydrate degradation; pentose phosphate pathway; D-ribose 5-phosphate from D-ribulose 5-phosphate (non-oxidative stage): step 1/1. Its function is as follows. Catalyzes the reversible conversion of ribose-5-phosphate to ribulose 5-phosphate. The chain is Ribose-5-phosphate isomerase A from Vibrio parahaemolyticus serotype O3:K6 (strain RIMD 2210633).